The sequence spans 259 residues: Proteasome subunit alpha (259 aa).

Belongs to the peptidase T1A family. As to quaternary structure, the 20S proteasome core is composed of 14 alpha and 14 beta subunits that assemble into four stacked heptameric rings, resulting in a barrel-shaped structure. The two inner rings, each composed of seven catalytic beta subunits, are sandwiched by two outer rings, each composed of seven alpha subunits. The catalytic chamber with the active sites is on the inside of the barrel. Has a gated structure, the ends of the cylinder being occluded by the N-termini of the alpha-subunits. Is capped at one or both ends by the proteasome regulatory ATPase, PAN.

Its subcellular location is the cytoplasm. The formation of the proteasomal ATPase PAN-20S proteasome complex, via the docking of the C-termini of PAN into the intersubunit pockets in the alpha-rings, triggers opening of the gate for substrate entry. Interconversion between the open-gate and close-gate conformations leads to a dynamic regulation of the 20S proteasome proteolysis activity. Component of the proteasome core, a large protease complex with broad specificity involved in protein degradation. This is Proteasome subunit alpha from Methanococcus maripaludis (strain C5 / ATCC BAA-1333).